Consider the following 191-residue polypeptide: Large ribosomal subunit protein bL9 (191 aa).

Positions 149–191 (EEAERQSKGESLTSADAIYGVDEDALRPEDFFDPEADGNEDDE) are disordered. Acidic residues predominate over residues 179 to 191 (FFDPEADGNEDDE).

It belongs to the bacterial ribosomal protein bL9 family.

In terms of biological role, binds to the 23S rRNA. This chain is Large ribosomal subunit protein bL9 (rplI), found in Agrobacterium fabrum (strain C58 / ATCC 33970) (Agrobacterium tumefaciens (strain C58)).